Consider the following 311-residue polypeptide: Probable manganese-dependent inorganic pyrophosphatase (311 aa).

His9, Asp13, Asp15, Asp77, His99, and Asp151 together coordinate Mn(2+).

It belongs to the PPase class C family. Mn(2+) is required as a cofactor.

The protein resides in the cytoplasm. It catalyses the reaction diphosphate + H2O = 2 phosphate + H(+). The chain is Probable manganese-dependent inorganic pyrophosphatase from Streptococcus pyogenes serotype M1.